Consider the following 130-residue polypeptide: Capsid protein (130 aa).

Residues 31 to 104 (EWLSNNSRSQ…FAATDDVTVI (74 aa)) form a viral RNA-binding region.

This sequence belongs to the Leviviricetes capsid protein family. As to quaternary structure, homodimer. The capsid proteins form dimers that assemble by group of 5. Twelve such pentamers are linked together with free dimers. The homodimers binds to the viral RNA via an operator hairpin, but also to many other RNA sequences in the viral genome; this interaction probably shifts the virus from the replicative to the assembly phase and ensures specific encapsidation of the viral genome.

Its subcellular location is the virion. Functionally, capsid protein self-assembles to form an icosahedral capsid with a T=3 symmetry, about 26 nm in diameter, and consisting of 89 capsid proteins dimers (178 capsid proteins). Involved in viral genome encapsidation through the interaction between a capsid protein dimer and the multiple packaging signals present in the RNA genome. The capsid also contains 1 copy of the A2 maturation protein. In terms of biological role, acts as a translational repressor of viral replicase synthesis late in infection. This latter function is the result of capsid protein interaction with an RNA hairpin which contains the replicase ribosome-binding site. This is Capsid protein from Escherichia coli (Bacteriophage JP34).